Here is a 290-residue protein sequence, read N- to C-terminus: Acetyl-coenzyme A carboxylase carboxyl transferase subunit beta (290 aa).

The region spanning 28 to 290 (IMTKCPKCKK…SRGGDEWHTN (263 aa)) is the CoA carboxyltransferase N-terminal domain. The Zn(2+) site is built by cysteine 32, cysteine 35, cysteine 51, and cysteine 54. A C4-type zinc finger spans residues 32-54 (CPKCKKIMYTKELVKNLRVCISC).

Belongs to the AccD/PCCB family. Acetyl-CoA carboxylase is a heterohexamer composed of biotin carboxyl carrier protein (AccB), biotin carboxylase (AccC) and two subunits each of ACCase subunit alpha (AccA) and ACCase subunit beta (AccD). Zn(2+) is required as a cofactor.

It is found in the cytoplasm. It catalyses the reaction N(6)-carboxybiotinyl-L-lysyl-[protein] + acetyl-CoA = N(6)-biotinyl-L-lysyl-[protein] + malonyl-CoA. It functions in the pathway lipid metabolism; malonyl-CoA biosynthesis; malonyl-CoA from acetyl-CoA: step 1/1. Its function is as follows. Component of the acetyl coenzyme A carboxylase (ACC) complex. Biotin carboxylase (BC) catalyzes the carboxylation of biotin on its carrier protein (BCCP) and then the CO(2) group is transferred by the transcarboxylase to acetyl-CoA to form malonyl-CoA. The polypeptide is Acetyl-coenzyme A carboxylase carboxyl transferase subunit beta (Anoxybacillus flavithermus (strain DSM 21510 / WK1)).